The chain runs to 329 residues: Aurora kinase B (329 aa).

Residues 1 to 14 (MTLSRAKHANRNHL) are compositionally biased toward basic residues. A disordered region spans residues 1–21 (MTLSRAKHANRNHLPHLLAKV). Positions 53-305 (FEMGAHLGRG…LVDVMTHYWV (253 aa)) constitute a Protein kinase domain. ATP is bound by residues 59-67 (LGRGKFGRV) and Lys-82. Asp-178 (proton acceptor) is an active-site residue.

The protein belongs to the protein kinase superfamily. Ser/Thr protein kinase family. Aurora subfamily. As to quaternary structure, interacts with Incenp and Cdc37. Mg(2+) serves as cofactor.

Its subcellular location is the chromosome. The protein resides in the cytoplasm. It localises to the cytoskeleton. The protein localises to the midbody. The catalysed reaction is L-seryl-[protein] + ATP = O-phospho-L-seryl-[protein] + ADP + H(+). It catalyses the reaction L-threonyl-[protein] + ATP = O-phospho-L-threonyl-[protein] + ADP + H(+). In terms of biological role, serine/threonine-protein kinase that mediates both meiotic and mitotic chromosome segregation. Required for histone H3 'Ser-10' phosphorylation. Phosphorylates mei-S332 within residues 124-126 and stabilizes its association with centromeres during meiosis. May regulate the function of the ESCRT-III complex core component shrb during abscission of germline cells in oogenesis. This Drosophila melanogaster (Fruit fly) protein is Aurora kinase B.